Reading from the N-terminus, the 315-residue chain is Acetaldehyde dehydrogenase 2 (315 aa).

NAD(+) is bound at residue 15–18 (SGNI). The Acyl-thioester intermediate role is filled by Cys135. NAD(+)-binding positions include 166–174 (SAGPGTRAN) and Asn293.

The protein belongs to the acetaldehyde dehydrogenase family.

The enzyme catalyses acetaldehyde + NAD(+) + CoA = acetyl-CoA + NADH + H(+). The polypeptide is Acetaldehyde dehydrogenase 2 (Paraburkholderia phymatum (strain DSM 17167 / CIP 108236 / LMG 21445 / STM815) (Burkholderia phymatum)).